Consider the following 272-residue polypeptide: Ribosomal RNA small subunit methyltransferase A (272 aa).

Positions 10, 12, 37, 57, 82, and 98 each coordinate S-adenosyl-L-methionine.

This sequence belongs to the class I-like SAM-binding methyltransferase superfamily. rRNA adenine N(6)-methyltransferase family. RsmA subfamily.

It is found in the cytoplasm. The catalysed reaction is adenosine(1518)/adenosine(1519) in 16S rRNA + 4 S-adenosyl-L-methionine = N(6)-dimethyladenosine(1518)/N(6)-dimethyladenosine(1519) in 16S rRNA + 4 S-adenosyl-L-homocysteine + 4 H(+). Specifically dimethylates two adjacent adenosines (A1518 and A1519) in the loop of a conserved hairpin near the 3'-end of 16S rRNA in the 30S particle. May play a critical role in biogenesis of 30S subunits. The sequence is that of Ribosomal RNA small subunit methyltransferase A from Gloeobacter violaceus (strain ATCC 29082 / PCC 7421).